Here is a 226-residue protein sequence, read N- to C-terminus: Phosphoheptose isomerase (226 aa).

An SIS domain is found at 50 to 212 (IAGVFETGGK…ERMMGYGTEC (163 aa)). Residue 65–67 (NGG) participates in substrate binding. Zn(2+)-binding residues include H74 and E78. Residues E78, 109–110 (ND), 135–137 (STS), S140, and Q188 contribute to the substrate site. Positions 188 and 196 each coordinate Zn(2+).

The protein belongs to the SIS family. GmhA subfamily. It depends on Zn(2+) as a cofactor.

Its subcellular location is the cytoplasm. It carries out the reaction 2 D-sedoheptulose 7-phosphate = D-glycero-alpha-D-manno-heptose 7-phosphate + D-glycero-beta-D-manno-heptose 7-phosphate. Its pathway is carbohydrate biosynthesis; D-glycero-D-manno-heptose 7-phosphate biosynthesis; D-glycero-alpha-D-manno-heptose 7-phosphate and D-glycero-beta-D-manno-heptose 7-phosphate from sedoheptulose 7-phosphate: step 1/1. In terms of biological role, catalyzes the isomerization of sedoheptulose 7-phosphate in D-glycero-D-manno-heptose 7-phosphate. In Chlorobium phaeobacteroides (strain DSM 266 / SMG 266 / 2430), this protein is Phosphoheptose isomerase.